The chain runs to 504 residues: Transcription factor NDT80 (504 aa).

Disordered regions lie at residues 64-172 (MHFN…QHHM), 283-310 (NGFP…NQHA), and 477-504 (RGRS…TPPQ). 4 stretches are compositionally biased toward low complexity: residues 73 to 87 (QQQQ…QQQQ), 103 to 145 (QGPT…ARQP), 153 to 172 (QQAQ…QHHM), and 292 to 301 (HPQNQPQNHP). The NDT80 DNA-binding region spans 160-488 (QADAQSQAQQ…RSPSSYHKDR (329 aa)).

It is found in the nucleus. In terms of biological role, meiosis-specific transcription factor that binds to the middle sporulation element (MSE) of targeted genes corresponding to the consensus sequence 5'-ACACAAA-3'. Acts as an activator of CDR1 induction by antifungal drugs. Modulates azole sensitivity by controlling the expression of ergosterol biosynthesis genes. Required for hyphal growth in response to different filament-inducing cues and for the proper expression of genes characterizing the filamentous transcriptional program including noteworthy genes encoding cell wall components, such as HWP1, ECE1, RBT4, and ALS3. Is essential for the completion of cell separation through the direct transcriptional regulation of genes encoding the chitinase CHT3 and the cell wall glucosidase SUN41. Required for biofilm formation and plays a key role in microcolony formation under both flow and static conditions and to epithelial surfaces. Essential for virulence. The polypeptide is Transcription factor NDT80 (Candida albicans (strain SC5314 / ATCC MYA-2876) (Yeast)).